Here is a 351-residue protein sequence, read N- to C-terminus: Small ribosomal subunit protein uS2 (351 aa).

A disordered region spans residues 302–351 (QNNYDPSKRGYNPKYVNHKSTFNKFNNKKPAEATSQAKTNEKIVIKAETN). A compositionally biased stretch (basic and acidic residues) spans 340–351 (TNEKIVIKAETN).

The protein belongs to the universal ribosomal protein uS2 family.

The sequence is that of Small ribosomal subunit protein uS2 from Ureaplasma urealyticum serovar 10 (strain ATCC 33699 / Western).